Here is a 108-residue protein sequence, read N- to C-terminus: Large ribosomal subunit protein uL22 (108 aa).

The protein belongs to the universal ribosomal protein uL22 family. In terms of assembly, part of the 50S ribosomal subunit.

This protein binds specifically to 23S rRNA; its binding is stimulated by other ribosomal proteins, e.g. L4, L17, and L20. It is important during the early stages of 50S assembly. It makes multiple contacts with different domains of the 23S rRNA in the assembled 50S subunit and ribosome. Functionally, the globular domain of the protein is located near the polypeptide exit tunnel on the outside of the subunit, while an extended beta-hairpin is found that lines the wall of the exit tunnel in the center of the 70S ribosome. This is Large ribosomal subunit protein uL22 from Nitratiruptor sp. (strain SB155-2).